Reading from the N-terminus, the 303-residue chain is Proline dehydrogenase 2 (303 aa).

Lys-96 provides a ligand contact to substrate. Residue Asp-130 is part of the active site. FAD is bound by residues Met-131 and Gln-159. Residue Arg-180 is part of the active site. Residues 183-185 (KGA) and 222-223 (TH) each bind FAD. 284–285 (RR) lines the substrate pocket.

It belongs to the proline dehydrogenase family. The cofactor is FAD.

It catalyses the reaction L-proline + a quinone = (S)-1-pyrroline-5-carboxylate + a quinol + H(+). It functions in the pathway amino-acid degradation; L-proline degradation into L-glutamate; L-glutamate from L-proline: step 1/2. Converts proline to delta-1-pyrroline-5-carboxylate. Important for the use of proline as a sole carbon and energy source or a sole nitrogen source. This chain is Proline dehydrogenase 2, found in Bacillus subtilis (strain 168).